The chain runs to 484 residues: Muscarinic acetylcholine receptor M4 (484 aa).

Over 1–32 (MENDTWENESSASNHSIDETIVEIPGKYQTME) the chain is Extracellular. N-linked (GlcNAc...) asparagine glycans are attached at residues asparagine 3, asparagine 8, and asparagine 14. A helical transmembrane segment spans residues 33–55 (MIFIATVTGSLSLVTVVGNILVM). At 56–69 (LSIKVNRQLQTVNN) the chain is on the cytoplasmic side. Residues 70–90 (YFLFSLACADLIIGVFSMNLY) traverse the membrane as a helical segment. Residues 91–107 (SLYIIKGYWPLGPIVCD) are Extracellular-facing. The cysteines at positions 106 and 186 are disulfide-linked. A helical transmembrane segment spans residues 108–129 (LWLALDYVVSNASVMNLLIISL). Topologically, residues 130–149 (ERXFCVTKPLTYPARRTTKM) are cytoplasmic. Residues 150–172 (AGLMIAAAWLLSFELWAPAILFW) form a helical membrane-spanning segment. The Extracellular portion of the chain corresponds to 173–194 (QFIVGQRTVPSGECYIQFLSNP). The helical transmembrane segment at 195-217 (AVTFGTAIAAFYLPVVIMTILYI) threads the bilayer. Topologically, residues 218-406 (HISLASRSRV…AAREKKVTRT (189 aa)) are cytoplasmic. Positions 255-316 (NIPKQDAGDK…EKQPLSEASS (62 aa)) are disordered. Positions 260-270 (DAGDKVVEKKN) are enriched in basic and acidic residues. Residues 407 to 427 (IFAILLAFIITWTPYNVMVLI) traverse the membrane as a helical segment. Residues 428–441 (NTFCQTCIPETIWY) are Extracellular-facing. A helical transmembrane segment spans residues 442–461 (IGYWLCYVNSTINPACYALC). The Cytoplasmic portion of the chain corresponds to 462–484 (NATFKKTFKHLLMCQYKSIGTAR).

This sequence belongs to the G-protein coupled receptor 1 family. Muscarinic acetylcholine receptor subfamily. CHRM4 sub-subfamily.

The protein localises to the cell membrane. Its subcellular location is the postsynaptic cell membrane. Functionally, the muscarinic acetylcholine receptor mediates various cellular responses, including inhibition of adenylate cyclase, breakdown of phosphoinositides and modulation of potassium channels through the action of G proteins. Primary transducing effect is inhibition of adenylate cyclase. In Xenopus laevis (African clawed frog), this protein is Muscarinic acetylcholine receptor M4 (chrm4).